The sequence spans 341 residues: CRISPR-associated endonuclease Cas1 (341 aa).

Mn(2+) is bound by residues E173, H242, and E257.

Belongs to the CRISPR-associated endonuclease Cas1 family. As to quaternary structure, homodimer, forms a heterotetramer with a Cas2 homodimer. The cofactor is Mg(2+). Mn(2+) serves as cofactor.

CRISPR (clustered regularly interspaced short palindromic repeat), is an adaptive immune system that provides protection against mobile genetic elements (viruses, transposable elements and conjugative plasmids). CRISPR clusters contain spacers, sequences complementary to antecedent mobile elements, and target invading nucleic acids. CRISPR clusters are transcribed and processed into CRISPR RNA (crRNA). Acts as a dsDNA endonuclease. Involved in the integration of spacer DNA into the CRISPR cassette. The polypeptide is CRISPR-associated endonuclease Cas1 (Korarchaeum cryptofilum (strain OPF8)).